Consider the following 337-residue polypeptide: uncharacterized protein (337 aa).

The F-box domain maps to 12–60 (SLNYVDLPDTVHRKIFEYLNPWEIFKLSRISKAIHVTILKNKKFAVKDI).

This is an uncharacterized protein from Caenorhabditis elegans.